A 162-amino-acid chain; its full sequence is Phosphopantetheine adenylyltransferase (162 aa).

Ser-11 lines the substrate pocket. Residues 11-12 and His-19 each bind ATP; that span reads SF. Lys-43, Val-76, and Arg-90 together coordinate substrate. ATP is bound by residues 91–93, Glu-101, and 126–132; these read GLR and LKFVSSS.

This sequence belongs to the bacterial CoaD family. In terms of assembly, homohexamer. Mg(2+) is required as a cofactor.

It localises to the cytoplasm. It catalyses the reaction (R)-4'-phosphopantetheine + ATP + H(+) = 3'-dephospho-CoA + diphosphate. It functions in the pathway cofactor biosynthesis; coenzyme A biosynthesis; CoA from (R)-pantothenate: step 4/5. Functionally, reversibly transfers an adenylyl group from ATP to 4'-phosphopantetheine, yielding dephospho-CoA (dPCoA) and pyrophosphate. This Streptococcus suis (strain 05ZYH33) protein is Phosphopantetheine adenylyltransferase.